The chain runs to 768 residues: Disabled homolog 2 (768 aa).

Over residues 1–16 (MSNEVETSTTNGQPDQ) the composition is skewed to polar residues. The interval 1–36 (MSNEVETSTTNGQPDQQAAPKAPSKKEKKKGSEKTD) is disordered. At S2 the chain carries N-acetylserine. S2 carries the post-translational modification Phosphoserine. The 152-residue stretch at 45–196 (GDGVKYKAKL…KAEENGSEAL (152 aa)) folds into the PID domain. Y170 bears the Phosphotyrosine mark. Residue S193 is modified to Phosphoserine. A required for localization to clathrin-coated pits region spans residues 230 to 447 (ESRDILLVDL…KPGRGRRTAK (218 aa)). A disordered region spans residues 285–449 (NFFPTPNPDP…GRGRRTAKSS (165 aa)). Short sequence motifs (DPF) lie at residues 293–295 (DPF) and 298–300 (DPF). Composition is skewed to polar residues over residues 303–317 (PDQS…LTSA), 325–334 (GSLSTPQSKG), and 367–381 (PSSQ…QNGV). Phosphoserine; in mitosis is present on residues S326 and S328. A Phosphoserine modification is found at S401. The tract at residues 601–731 (TISTQSFPQP…GVLSGTKSAD (131 aa)) is sufficient for interaction with GRB2. A required for interaction with CSK region spans residues 619–627 (PPQPPPRNG). The tract at residues 649-768 (KEVKEMFKDF…HRSPFGNPFA (120 aa)) is required for interaction with MYO6. Disordered stretches follow at residues 660 to 682 (LRQP…SSAF) and 709 to 768 (NKIN…NPFA). Residues 663–671 (PPLVPSRKG) form a required for interaction with GRB2 and CSK region. The residue at position 673 (T673) is a Phosphothreonine. Residue S675 is modified to Phosphoserine. The segment at 708-724 (LNKINEPPKPAPRQGVL) is sufficient for interaction with SH3KBP1 SH3 domain. Residues 724–755 (LSGTKSADNSLENPFSKGFSSTNPSVVSQPAS) show a composition bias toward polar residues. S729 and S761 each carry phosphoserine.

As to quaternary structure, can interact (via PID domain) with LDLR, APP, APLP1 and APLP2, and weakly with INPP5D (via NPXY motifs); the interaction is impaired by tyrosine phosphorylation of the respective NPXY motifs. Can weakly interact (via PID domain) with LRP1 (via NPXY motif); the interaction is enhanced by tyrosine phosphorylation of the NPXY motif. Interacts with LRP2 (via NPXY motif); the interaction is not affected by tyrosine phosphorylation of the NPXY motif. Interacts with clathrin; in vitro can assemble clathrin triskelia into polyhedral coats. Interacts with AP2A2, ITGB1, ITGB3, ITGB5, PIAS2, DAB2IP, NOSTRIN, FCHO1, DVL3, EPS15, ITSN1 and EPS15L1. Interacts with SH3KBP1 (via SH3 domains). Interacts with GRB2; competes with SOS1 for binding to GRB2 and the interaction is enhanced by EGF and NT-3 stimulation. Interacts with MAP3K7; the interaction is induced by TGF-beta stimulation and may mediate TGF-beta stimulated JNK activation. Interacts with AXIN1 and PPP1CA; the interactions are mutually exclusive. Interacts with the globular tail of MYO6. Interacts (via DPF motifs) with FCHO2; the interaction is direct and required for DAB2-mediated LDLR endocytosis. Interacts with LRP6; the interaction involves LRP6 phosphorylation by CK2 and sequesters LRP6 towards clathrin-mediated endocytosis. Associates with the TGF-beta receptor complex. Interacts with SMAD2 and SMAD3; the interactions are enhanced upon TGF-beta stimulation. Interacts with GRB2; the interaction is enhanced by EGF and NT-3 stimulation. Interacts with SRC; the interaction is enhanced by EGF stimulation. Interacts with GRB2; the interaction is enhanced by EGF and NT-3 stimulation. Interacts (via NPXY motif) with DAB2 (via PID domain). Phosphorylated. Phosphorylation during mitosis is leading to membrane displacement. There is some ambiguity for the mitotic phosphosite Ser-326/328. In terms of tissue distribution, prostate.

The protein resides in the cytoplasm. The protein localises to the cytoplasmic vesicle. It is found in the clathrin-coated vesicle membrane. Its subcellular location is the membrane. It localises to the clathrin-coated pit. Functionally, adapter protein that functions as a clathrin-associated sorting protein (CLASP) required for clathrin-mediated endocytosis of selected cargo proteins. Can bind and assemble clathrin, and binds simultaneously to phosphatidylinositol 4,5-bisphosphate (PtdIns(4,5)P2) and cargos containing non-phosphorylated NPXY internalization motifs, such as the LDL receptor, to recruit them to clathrin-coated pits. Can function in clathrin-mediated endocytosis independently of the AP-2 complex. Involved in endocytosis of integrin beta-1; this function seems to redundant with the AP-2 complex and seems to require DAB2 binding to endocytosis accessory EH domain-containing proteins such as EPS15, EPS15L1 and ITSN1. Involved in endocytosis of cystic fibrosis transmembrane conductance regulator/CFTR. Involved in endocytosis of megalin/LRP2 lipoprotein receptor during embryonal development. Required for recycling of the TGF-beta receptor. Involved in CFTR trafficking to the late endosome. Involved in several receptor-mediated signaling pathways. Involved in TGF-beta receptor signaling and facilitates phosphorylation of the signal transducer SMAD2. Mediates TFG-beta-stimulated JNK activation. May inhibit the canoniocal Wnt/beta-catenin signaling pathway by stabilizing the beta-catenin destruction complex through a competing association with axin preventing its dephosphorylation through protein phosphatase 1 (PP1). Sequesters LRP6 towards clathrin-mediated endocytosis, leading to inhibition of Wnt/beta-catenin signaling. May activate non-canonical Wnt signaling. In cell surface growth factor/Ras signaling pathways proposed to inhibit ERK activation by interrupting the binding of GRB2 to SOS1 and to inhibit SRC by preventing its activating phosphorylation at 'Tyr-419'. Proposed to be involved in modulation of androgen receptor (AR) signaling mediated by SRC activation; seems to compete with AR for interaction with SRC. Plays a role in the CSF-1 signal transduction pathway. Plays a role in cellular differentiation. Involved in cell positioning and formation of visceral endoderm (VE) during embryogenesis and proposed to be required in the VE to respond to Nodal signaling coming from the epiblast. Required for the epithelial to mesenchymal transition, a process necessary for proper embryonic development. May be involved in myeloid cell differentiation and can induce macrophage adhesion and spreading. May act as a tumor suppressor. In Rattus norvegicus (Rat), this protein is Disabled homolog 2 (Dab2).